The sequence spans 567 residues: MAEANQLFKEFKIQSVSEFFRRNAAMLGYTGKVRSLTTLVHEAVTNSLDACEEAGIPPYVRVEIEELGNEHYKVVVEDNGPGIPEKYITHVFGKMLAGTKAHRNIQSRGQQGIGISGAVMFAQITSGKATRVITSTGNDEIIEAWVKIDVDKNEGKIVKKEKHPNPKGWRGTRIELEVKNVKYMRSKQGVFWYLKLTAIANPHAHIELIEPDGKLIVFPRSSDYIPEPPVEMKPHPKGVLTDDVYRLAKKTRRNTVRRFLIGEFSRISDKKVDELIEYIAALRLIKTVEDKKLQEQYYQKLMEGHVKAVLRAFKGYTKVVKQVAKMMEKPPEKLTWHEAEEIVEAFKYMKFLAPPTHGLRPIGEENIEKGLKGILKPEFVTAVTRPPKVYSGGIPFQVEVGIAYGGEIPAGFDLYRYANRVPLLFDAGSCVTTQAARSIDWKRYKIDDLDRAPLVLMINVVSVHVPYTGTGKQSIASVDEIYNEIRLAIMDAARRLQTYLSGKHRKLAQVKRRKTFEKYVPEIARALSILTGEPEEKIREYFIRFIESKFASAEVEEVAAEEVAENA.

ATP contacts are provided by residues N46, D78, 99–100, 109–116, and K472; these read TK and GQQGIGIS.

The protein belongs to the TOP6B family. As to quaternary structure, homodimer. Heterotetramer of two Top6A and two Top6B chains.

It catalyses the reaction ATP-dependent breakage, passage and rejoining of double-stranded DNA.. Functionally, relaxes both positive and negative superturns and exhibits a strong decatenase activity. This is Type 2 DNA topoisomerase 6 subunit B from Thermococcus kodakarensis (strain ATCC BAA-918 / JCM 12380 / KOD1) (Pyrococcus kodakaraensis (strain KOD1)).